The sequence spans 169 residues: Fumarase E (169 aa).

It belongs to the MtlR/FumE family. In terms of assembly, homodimer.

It catalyses the reaction (S)-malate = fumarate + H2O. In terms of biological role, in vitro catalyzes the addition of water to fumarate, forming malate. Cannot catalyze the reverse reaction. Cannot use the cis-isomer maleate as substrate. The protein is Fumarase E of Shigella flexneri.